A 356-amino-acid polypeptide reads, in one-letter code: D-alanine--D-alanine ligase (356 aa).

The 206-residue stretch at 134-339 (KQLFATRGLP…YSELITDLIN (206 aa)) folds into the ATP-grasp domain. An ATP-binding site is contributed by 167 to 222 (EGKLTYPVFVKPANLGSSVGISKCTDSETLIHGIEEALQFDRKLVIEQGVNAREVE). Mg(2+)-binding residues include Asp-293, Glu-306, and Asn-308.

This sequence belongs to the D-alanine--D-alanine ligase family. It depends on Mg(2+) as a cofactor. The cofactor is Mn(2+).

The protein resides in the cytoplasm. It carries out the reaction 2 D-alanine + ATP = D-alanyl-D-alanine + ADP + phosphate + H(+). It functions in the pathway cell wall biogenesis; peptidoglycan biosynthesis. Cell wall formation. This chain is D-alanine--D-alanine ligase, found in Macrococcus caseolyticus (strain JCSC5402) (Macrococcoides caseolyticum).